The following is a 388-amino-acid chain: Cell adhesion molecule 4 (388 aa).

The N-terminal stretch at Met1 to Gly20 is a signal peptide. One can recognise an Ig-like V-type domain in the interval Pro21–Thr119. Over Gln25 to Ala324 the chain is Extracellular. N-linked (GlcNAc...) asparagine glycosylation is found at Asn31 and Asn67. Intrachain disulfides connect Cys44/Cys104, Cys145/Cys199, and Cys245/Cys291. Ig-like C2-type domains lie at Pro124–Asp219 and Pro224–Val307. An N-linked (GlcNAc...) asparagine glycan is attached at Asn286. A helical membrane pass occupies residues Ile325–Val345. Residues Trp346 to Ile388 lie on the Cytoplasmic side of the membrane. Ser361 is modified (phosphoserine).

The protein belongs to the nectin family. Monomer and homodimer. Post-translationally, N-glycosylated.

The protein resides in the membrane. In terms of biological role, involved in the cell-cell adhesion. Has calcium- and magnesium-independent cell-cell adhesion activity. May have tumor-suppressor activity. The protein is Cell adhesion molecule 4 (Cadm4) of Rattus norvegicus (Rat).